A 655-amino-acid polypeptide reads, in one-letter code: THO complex subunit 1 (655 aa).

2 disordered regions span residues 403-427 (ERPA…LGKG) and 539-574 (PSEE…AVTN). The short motif at 415-431 (RKRQAPEDFLGKGPDRK) is the Nuclear localization signal element. Positions 418–427 (QAPEDFLGKG) are enriched in basic and acidic residues. Positions 563–574 (DSPSIQSKAVTN) are enriched in polar residues. The Death domain maps to 573–655 (TNSQMDEIAA…NNIADNLSET (83 aa)).

In terms of assembly, component of the THO complex. In terms of tissue distribution, expressed in the developing neuromast.

Its subcellular location is the nucleus. The protein localises to the nucleoplasm. It is found in the nucleus matrix. It localises to the cytoplasm. The protein resides in the cytosol. Functionally, component of the THO subcomplex of the TREX complex which is thought to couple mRNA transcription, processing and nuclear export, and which specifically associates with spliced mRNA and not with unspliced pre-mRNA. Required for efficient export of polyadenylated RNA. The THOC1-THOC2-THOC3 core complex alone is sufficient to bind export factor NXF1-NXT1 and promote ATPase activity of DDX39B. TREX is recruited to spliced mRNAs by a transcription-independent mechanism, binds to mRNA upstream of the exon-junction complex (EJC) and is recruited in a splicing- and cap-dependent manner to a region near the 5' end of the mRNA where it functions in mRNA export to the cytoplasm via the TAP/NXF1 pathway. Regulates transcriptional elongation of a subset of genes. Involved in genome stability by preventing co-transcriptional R-loop formation. May play a role in hair cell formation, hence may be involved in hearing. Its function is as follows. Participates in an apoptotic pathway which is characterized by activation of caspase-6, increases in the expression of BAK1 and BCL2L1 and activation of NF-kappa-B. This pathway does not require p53/TP53, nor does the presence of p53/TP53 affect the efficiency of cell killing. Activates a G2/M cell cycle checkpoint prior to the onset of apoptosis. Apoptosis is inhibited by association with RB1. Essential for early embryonic development. Required for normal gene expression during postnatal testis development. The chain is THO complex subunit 1 (thoc1) from Danio rerio (Zebrafish).